A 444-amino-acid polypeptide reads, in one-letter code: Phosphoglucosamine mutase (444 aa).

Catalysis depends on Ser-102, which acts as the Phosphoserine intermediate. Residues Ser-102, Asp-241, Asp-243, and Asp-245 each coordinate Mg(2+). A Phosphoserine modification is found at Ser-102.

The protein belongs to the phosphohexose mutase family. Requires Mg(2+) as cofactor. Activated by phosphorylation.

It catalyses the reaction alpha-D-glucosamine 1-phosphate = D-glucosamine 6-phosphate. Catalyzes the conversion of glucosamine-6-phosphate to glucosamine-1-phosphate. This is Phosphoglucosamine mutase from Leptothrix cholodnii (strain ATCC 51168 / LMG 8142 / SP-6) (Leptothrix discophora (strain SP-6)).